Consider the following 198-residue polypeptide: Recombination protein RecR (198 aa).

Residues C56–C71 form a C4-type zinc finger. The Toprim domain occupies H79–P174.

It belongs to the RecR family.

In terms of biological role, may play a role in DNA repair. It seems to be involved in an RecBC-independent recombinational process of DNA repair. It may act with RecF and RecO. This Xylella fastidiosa (strain Temecula1 / ATCC 700964) protein is Recombination protein RecR.